We begin with the raw amino-acid sequence, 151 residues long: D-aminoacyl-tRNA deacylase (151 aa).

A Gly-cisPro motif, important for rejection of L-amino acids motif is present at residues 142 to 143 (GP).

Belongs to the DTD family. In terms of assembly, homodimer.

Its subcellular location is the cytoplasm. It catalyses the reaction glycyl-tRNA(Ala) + H2O = tRNA(Ala) + glycine + H(+). It carries out the reaction a D-aminoacyl-tRNA + H2O = a tRNA + a D-alpha-amino acid + H(+). Functionally, an aminoacyl-tRNA editing enzyme that deacylates mischarged D-aminoacyl-tRNAs. Also deacylates mischarged glycyl-tRNA(Ala), protecting cells against glycine mischarging by AlaRS. Acts via tRNA-based rather than protein-based catalysis; rejects L-amino acids rather than detecting D-amino acids in the active site. By recycling D-aminoacyl-tRNA to D-amino acids and free tRNA molecules, this enzyme counteracts the toxicity associated with the formation of D-aminoacyl-tRNA entities in vivo and helps enforce protein L-homochirality. In Psychrobacter arcticus (strain DSM 17307 / VKM B-2377 / 273-4), this protein is D-aminoacyl-tRNA deacylase.